The chain runs to 79 residues: UPF0349 protein BCE33L4669 (79 aa).

It belongs to the UPF0349 family.

The polypeptide is UPF0349 protein BCE33L4669 (Bacillus cereus (strain ZK / E33L)).